The sequence spans 344 residues: MCTKMEQPFYHDDSYAAAGYGRSPGSLSLHDYKLLKPTLALNLADPYRGLKGPGARGPGPEGSGAGSYFSGQGSDTGASLKLASTELERLIVPNSNGVITTTPTPPGQYFYPRGGGSGGGTGGGVTEEQEGFADGFVKALDDLHKMNHVTPPNVSLGASGGPQAGPGGVYAGPEPPPVYTNLSSYSPASAPSGGSGTAVGTGSSYPTATISYLPHAPPFAGGHPAQLGLSRGASAFKEEPQTVPEARSRDATPPVSPINMEDQERIKVERKRLRNRLAATKCRKRKLERIARLEDKVKTLKAENAGLSSAAGLLREQVAQLKQKVMTHVSNGCQLLLGVKGHAF.

Residues Lys-4, Lys-33, and Lys-36 each participate in a glycyl lysine isopeptide (Lys-Gly) (interchain with G-Cter in SUMO2) cross-link. A compositionally biased stretch (gly residues) spans 51 to 65 (KGPGARGPGPEGSGA). The disordered stretch occupies residues 51–75 (KGPGARGPGPEGSGAGSYFSGQGSD). A Glycyl lysine isopeptide (Lys-Gly) (interchain with G-Cter in SUMO2) cross-link involves residue Lys-81. Residues Thr-102 and Thr-104 each carry the phosphothreonine modification. Ser-117 carries the phosphoserine modification. Lys-138 participates in a covalent cross-link: Glycyl lysine isopeptide (Lys-Gly) (interchain with G-Cter in SUMO2). Disordered stretches follow at residues 181 to 202 (NLSS…VGTG) and 237 to 257 (KEEP…PVSP). Over residues 183-192 (SSYSPASAPS) the composition is skewed to low complexity. At Lys-237 the chain carries N6-acetyllysine; alternate. Lys-237 participates in a covalent cross-link: Glycyl lysine isopeptide (Lys-Gly) (interchain with G-Cter in SUMO1); alternate. Lys-237 participates in a covalent cross-link: Glycyl lysine isopeptide (Lys-Gly) (interchain with G-Cter in SUMO2); alternate. Residues 237 to 250 (KEEPQTVPEARSRD) are compositionally biased toward basic and acidic residues. At Ser-248 the chain carries Phosphoserine. Thr-252 bears the Phosphothreonine mark. Residue Ser-256 is modified to Phosphoserine. Positions 265 to 292 (RIKVERKRLRNRLAATKCRKRKLERIAR) are basic motif. Residues 265-328 (RIKVERKRLR…AQLKQKVMTH (64 aa)) enclose the bZIP domain. The tract at residues 293–321 (LEDKVKTLKAENAGLSSAAGLLREQVAQL) is leucine-zipper. Lys-340 is covalently cross-linked (Glycyl lysine isopeptide (Lys-Gly) (interchain with G-Cter in SUMO2)).

This sequence belongs to the bZIP family. Jun subfamily. In terms of assembly, binds DNA as a homodimer or as a heterodimer with another member of the Jun/Fos family. Component of an AP-1 transcription factor complex composed of JUN-FOS heterodimers. As part of the AP-1 transcription factor complex, forms heterodimers with FOSB, thereby binding to the AP-1 consensus sequence and stimulating transcription. Interacts with NFE2 (via its WW domains). In terms of processing, ubiquitinated by ITCH, leading to its degradation.

It is found in the nucleus. Transcription factor involved in regulating gene activity following the primary growth factor response. Binds to the DNA sequence 5'-TGA[GC]TCA-3'. Heterodimerizes with proteins of the FOS family to form an AP-1 transcription complex, thereby enhancing its DNA binding activity to an AP-1 consensus sequence 5'-TGA[GC]TCA-3' and enhancing its transcriptional activity. In Mus musculus (Mouse), this protein is Transcription factor JunB (Junb).